We begin with the raw amino-acid sequence, 389 residues long: Globin-like protein 6 (389 aa).

Residues 1–15 (MGNQSTKSTHGTTRV) show a composition bias toward polar residues. Disordered stretches follow at residues 1 to 38 (MGNQ…RSAS), 96 to 123 (RTSK…SVDS), and 143 to 185 (TVSS…SSNP). Over residues 16-25 (SHSKSAHHNS) the composition is skewed to basic residues. In terms of domain architecture, Globin spans 196-347 (HLTQPQILFV…VTEQLKEGFQ (152 aa)). Heme b is bound by residues histidine 254 and histidine 286. A disordered region spans residues 367-389 (SSFEISTKTKQSDMKRFHTLDNM). Residues 376–389 (KQSDMKRFHTLDNM) show a composition bias toward basic and acidic residues.

Belongs to the globin family. In terms of tissue distribution, expressed in the head and tail neurons and nerve cord.

Its function is as follows. May play a role as physiological sensor for oxygen via redox signaling and/or electron transport. This chain is Globin-like protein 6, found in Caenorhabditis elegans.